A 155-amino-acid chain; its full sequence is MSAAVKPLQIKILDPRLGTVWPLPTYATEASAGLDLRAALDAPMTLVPGDAELLSTGIAIHLVDPSLCAVVLPRSGLGHRHGIVLGNGTGLIDSDYQGPLLVSVWNRGREAFTIEPGDRIAQLVVLPIVRVVLQVVDTFVESGRGAGGFGHTGVR.

Residues 74–76 (RSG), Asn87, and 91–93 (LID) each bind substrate.

Belongs to the dUTPase family. Mg(2+) is required as a cofactor.

The enzyme catalyses dUTP + H2O = dUMP + diphosphate + H(+). It participates in pyrimidine metabolism; dUMP biosynthesis; dUMP from dCTP (dUTP route): step 2/2. In terms of biological role, this enzyme is involved in nucleotide metabolism: it produces dUMP, the immediate precursor of thymidine nucleotides and it decreases the intracellular concentration of dUTP so that uracil cannot be incorporated into DNA. This Xylella fastidiosa (strain M23) protein is Deoxyuridine 5'-triphosphate nucleotidohydrolase.